The primary structure comprises 556 residues: Arginine--tRNA ligase (556 aa).

The short motif at 130 to 140 is the 'HIGH' region element; that stretch reads ANPTGPIHLGG.

Belongs to the class-I aminoacyl-tRNA synthetase family. Monomer.

Its subcellular location is the cytoplasm. It catalyses the reaction tRNA(Arg) + L-arginine + ATP = L-arginyl-tRNA(Arg) + AMP + diphosphate. The chain is Arginine--tRNA ligase from Corynebacterium jeikeium (strain K411).